The sequence spans 415 residues: Fructose-like permease IIC component (415 aa).

The Cytoplasmic segment spans residues 1 to 46 (MAIKKRSATVVHGASGAAAAVKNPQASKSSFWGELPQHVMSGISRM). Positions 35 to 415 (LPQHVMSGIS…RKGKLLIESL (381 aa)) constitute a PTS EIIC type-2 domain. A helical transmembrane segment spans residues 47-67 (VPTLIMGGVILAFSQLIAYSW). Residues 68–101 (LKIPADIGIMDALNSGKFSGFDLSLLKFAWLSQS) are Periplasmic-facing. The chain crosses the membrane as a helical span at residues 102–122 (FGGVLFGFAIPMFAAFVANSI). Over 123–126 (GGKL) the chain is Cytoplasmic. A helical membrane pass occupies residues 127–147 (AFPAGFIGGLMSTQPTQLLNF). The Periplasmic segment spans residues 148–157 (DPSTMQWATS). The helical transmembrane segment at 158–178 (SPVPSTFIGALIISIVAGYLV) threads the bilayer. Over 179–197 (KWMNQKIQLPDFLLAFKTT) the chain is Cytoplasmic. Residues 198–218 (FLLPILSAIFVMLAMYYVITP) traverse the membrane as a helical segment. Topologically, residues 219-237 (FGGWINGGIRTVLTAAGEK) are periplasmic. The helical transmembrane segment at 238–258 (GALMYAMGIAAATAIDLGGPI) threads the bilayer. Topologically, residues 259 to 276 (NKAAGFVAFSFTTDHVLP) are cytoplasmic. A helical transmembrane segment spans residues 277-297 (VTARSIAIVIPPIGLGLATII). The Periplasmic segment spans residues 298-318 (DRRLTGKRLFNAQLYPQGKTA). Residues 319–339 (MFLAFMGISEGAIPFALESPI) form a helical membrane-spanning segment. The Cytoplasmic portion of the chain corresponds to 340 to 341 (TA). The helical transmembrane segment at 342–362 (IPSYMVGAIVGSTAAVWLGAV) threads the bilayer. The Periplasmic segment spans residues 363 to 378 (QWFPESAIWAWPLVTN). Residues 379–399 (LGVYMAGIALGAIITALMVVF) traverse the membrane as a helical segment. Over 400 to 415 (LRLMMFRKGKLLIESL) the chain is Cytoplasmic.

Its subcellular location is the cell inner membrane. Functionally, the phosphoenolpyruvate-dependent sugar phosphotransferase system (PTS), a major carbohydrate active -transport system, catalyzes the phosphorylation of incoming sugar substrates concomitant with their translocation across the cell membrane. The polypeptide is Fructose-like permease IIC component (fryC) (Escherichia coli O6:H1 (strain CFT073 / ATCC 700928 / UPEC)).